A 265-amino-acid polypeptide reads, in one-letter code: Protein B8 (265 aa).

The polypeptide is Protein B8 (B8) (Homo sapiens (Human)).